We begin with the raw amino-acid sequence, 83 residues long: U2-hexatoxin-Hi1a (83 aa).

The N-terminal stretch at 1–23 is a signal peptide; it reads MRNTTFLVLNVMLLVSVALFCAA. The propeptide occupies 24 to 45; that stretch reads DPEMEKSSFAEILDTGNPEQER. 4 cysteine pairs are disulfide-bonded: C47-C63, C54-C68, C62-C78, and C70-C76.

This sequence belongs to the neurotoxin 07 (Beta/delta-agtx) family. As to expression, expressed by the venom gland.

The protein localises to the secreted. Functionally, inhibits sodium channels (Nav) of insects. This is U2-hexatoxin-Hi1a from Hadronyche infensa (Fraser island funnel-web spider).